The following is a 239-amino-acid chain: Pimeloyl-[acyl-carrier protein] methyl ester esterase (239 aa).

Substrate is bound by residues Trp20, Ser77–Met78, and Phe138–Gln142. Ser77 (nucleophile) is an active-site residue. Catalysis depends on residues Asp192 and His220. His220 contacts substrate.

The protein belongs to the AB hydrolase superfamily. Carboxylesterase BioH family. In terms of assembly, monomer.

The protein localises to the cytoplasm. The catalysed reaction is 6-carboxyhexanoyl-[ACP] methyl ester + H2O = 6-carboxyhexanoyl-[ACP] + methanol + H(+). Its pathway is cofactor biosynthesis; biotin biosynthesis. Its function is as follows. The physiological role of BioH is to remove the methyl group introduced by BioC when the pimeloyl moiety is complete. It allows to synthesize pimeloyl-ACP via the fatty acid synthetic pathway through the hydrolysis of the ester bonds of pimeloyl-ACP esters. This Legionella pneumophila (strain Lens) protein is Pimeloyl-[acyl-carrier protein] methyl ester esterase.